Here is a 420-residue protein sequence, read N- to C-terminus: Reticulon-4 receptor-like 2 (420 aa).

A signal peptide spans 1–30 (MLPGLRRLLQGPASACLLLTLLALPPVTPS). Disulfide bonds link Cys31/Cys37 and Cys35/Cys46. The 30-residue stretch at 31 to 60 (CPMLCTCYSSPPTVSCQANNFSSVPLSLPP) folds into the LRRNT domain. The N-linked (GlcNAc...) asparagine glycan is linked to Asn50. LRR repeat units follow at residues 61–82 (STQRLFLQNNLIRSLRPGTFGP), 83–104 (NLLTLWLFSNNLSTIYPGTFRH), 107–129 (ALEELDLGDNRHLRSLEPDTFQG), 132–153 (RLQSLHLYRCQLSSLPGNIFRG), 156–177 (SLQYLYLQENSLLHLQDDLFAD), 180–201 (NLSHLFLHGNRLRLLTEHVFRG), 204–225 (SLDRLLLHGNRLQGVHRAAFHG), and 228–249 (RLTILYLFNNSLASLPGEALAD). A glycan (N-linked (GlcNAc...) asparagine) is linked at Asn93. The N-linked (GlcNAc...) asparagine glycan is linked to Asn236. An LRRCT domain is found at 261–312 (NPWACDCRARPLWAWFQRARVSSSDVTCATPPERQGRDLRTLRDTDFQACPP). 2 disulfide bridges follow: Cys265-Cys288 and Cys267-Cys310. Residues 286–390 (VTCATPPERQ…GEQTCPGAAC (105 aa)) are disordered. Positions 294–306 (RQGRDLRTLRDTD) are enriched in basic and acidic residues. Residues 315–327 (PTRPGSRARGNSS) are important for interaction with MAG. Basic and acidic residues predominate over residues 351-360 (LPAEDSRGRQ). Cys390 carries the GPI-anchor amidated cysteine lipid modification. Positions 391-420 (QAPADSRGPVLSAGLRTPLLCLLLLAPHHL) are cleaved as a propeptide — removed in mature form.

The protein belongs to the Nogo receptor family. As to quaternary structure, interaction with MAG is controversial, and may be indirect. Interacts with MAG. Does not interact with OMG and RTN4. Undergoes zinc metalloproteinase-mediated ectodomain shedding in neuroblastoma cells; is released both as a full-length ectodomain and an N-terminal fragment containing the leucine-rich repeat (LRR) region of the protein. In terms of processing, N-glycosylated. O-glycosylated. Contains terminal sialic acid groups on its glycan chains. In terms of tissue distribution, detected in adult brain, in neocortex, hippocampus, striatum and dorsal root ganglion neurons, and in retina (at protein level). In brain, detected in cerebral cortex and hippocampus. Weak or no expression detected in the cerebellum, thalamus or striatum.

Its subcellular location is the cell membrane. The protein localises to the cell projection. The protein resides in the dendrite. It is found in the perikaryon. It localises to the axon. Its subcellular location is the membrane raft. Its function is as follows. Cell surface receptor that plays a functionally redundant role in the inhibition of neurite outgrowth mediated by MAG. Plays a functionally redundant role in postnatal brain development. Contributes to normal axon migration across the brain midline and normal formation of the corpus callosum. Does not seem to play a significant role in regulating axon regeneration in the adult central nervous system. Protects motoneurons against apoptosis; protection against apoptosis is probably mediated by MAG. Like other family members, plays a role in restricting the number dendritic spines and the number of synapses that are formed during brain development. Signaling mediates activation of Rho and downstream reorganization of the actin cytoskeleton. This chain is Reticulon-4 receptor-like 2, found in Rattus norvegicus (Rat).